Here is a 571-residue protein sequence, read N- to C-terminus: MSDEKYPGPLVVEGKLVDAERLKKQSNYLRGGIAEDLHDGLTGGFNGDNFLLIRFHGMYQQDDRDIRAERAEQKLDARHAMMLRCRLPGGIMTPRQWLAIDKFATDNTIYGSIRLTNRQTFQFHGILKGNVKPAHQMLHEVGLDALATANDVNRNVLCSSNPIESELHQEAYEWAKKLSEHLLPRTRAYAEIWLDQEKVATTDEEPILGETYLPRKFKTTVVVPPHNDVDLHANDMNFVAIAENGRLVGFNLLVGGGLSIDHGNKATYARTASEFGYLPLSKILDVAEAVVTTQRDWGNRTDRKNAKTKYTLERVGPEVFKAEVERRAGMTFEPIRPYEFTTRGDRFGWVKGIDHKWHLTLFIENGRLLDYPDRPLKTGLAEIAKIHQGDFRLTANQNLIVAGVPESEKENIERLALSHGLMENVSHQRENSMACVAFPTCPLAMAEAERFLPQFVTRVEAIMNAHGVGDEHIVLRVTGCPNGCGRALLAEIGLVGKAPGRYNLHLGGNRIGTRIPRMYQENINEEQILATLDELIGRWSQERNADEGFGDFTLRAGVVKPVLDPARDFWQ.

Residues Cys435, Cys441, Cys480, and Cys484 each contribute to the [4Fe-4S] cluster site. Cys484 is a binding site for siroheme.

This sequence belongs to the nitrite and sulfite reductase 4Fe-4S domain family. In terms of assembly, alpha(8)-beta(8). The alpha component is a flavoprotein, the beta component is a hemoprotein. It depends on siroheme as a cofactor. Requires [4Fe-4S] cluster as cofactor.

It carries out the reaction hydrogen sulfide + 3 NADP(+) + 3 H2O = sulfite + 3 NADPH + 4 H(+). It participates in sulfur metabolism; hydrogen sulfide biosynthesis; hydrogen sulfide from sulfite (NADPH route): step 1/1. Its function is as follows. Component of the sulfite reductase complex that catalyzes the 6-electron reduction of sulfite to sulfide. This is one of several activities required for the biosynthesis of L-cysteine from sulfate. In Erwinia tasmaniensis (strain DSM 17950 / CFBP 7177 / CIP 109463 / NCPPB 4357 / Et1/99), this protein is Sulfite reductase [NADPH] hemoprotein beta-component.